Consider the following 861-residue polypeptide: Glucans biosynthesis glucosyltransferase H (861 aa).

The next 6 membrane-spanning stretches (helical) occupy residues 142–162 (FILL…MKGI), 188–208 (VLPY…FCWV), 516–536 (VFLT…FLVL), 573–593 (LFST…MLIW), 600–620 (FGGV…SVLL), and 683–703 (FLWW…VSVI).

This sequence belongs to the glycosyltransferase 2 family. OpgH subfamily.

The protein resides in the cell inner membrane. Its pathway is glycan metabolism; osmoregulated periplasmic glucan (OPG) biosynthesis. In terms of biological role, involved in the biosynthesis of osmoregulated periplasmic glucans (OPGs). The polypeptide is Glucans biosynthesis glucosyltransferase H (Pseudomonas aeruginosa (strain UCBPP-PA14)).